Here is a 310-residue protein sequence, read N- to C-terminus: tRNA-cytidine(32) 2-sulfurtransferase (310 aa).

The short motif at 47-52 (SGGKDS) is the PP-loop motif element. C122, C125, and C213 together coordinate [4Fe-4S] cluster.

It belongs to the TtcA family. As to quaternary structure, homodimer. Mg(2+) serves as cofactor. It depends on [4Fe-4S] cluster as a cofactor.

It is found in the cytoplasm. The catalysed reaction is cytidine(32) in tRNA + S-sulfanyl-L-cysteinyl-[cysteine desulfurase] + AH2 + ATP = 2-thiocytidine(32) in tRNA + L-cysteinyl-[cysteine desulfurase] + A + AMP + diphosphate + H(+). It functions in the pathway tRNA modification. Functionally, catalyzes the ATP-dependent 2-thiolation of cytidine in position 32 of tRNA, to form 2-thiocytidine (s(2)C32). The sulfur atoms are provided by the cysteine/cysteine desulfurase (IscS) system. The sequence is that of tRNA-cytidine(32) 2-sulfurtransferase from Haemophilus influenzae (strain 86-028NP).